The primary structure comprises 679 residues: PHD finger protein PERSISTENT TAPETAL CELL 1 (679 aa).

The PHD-type zinc-finger motif lies at 620 to 670 (VVDCACGAVDDDGERMACCDICEAWQHTRCAGIADTEDAPHVFLCSRCDND).

Its function is as follows. Probable transcriptional activator required for tapetal programmed cell death (PCD) and degeneration, and pollen development in anthers. The chain is PHD finger protein PERSISTENT TAPETAL CELL 1 from Oryza sativa subsp. japonica (Rice).